The sequence spans 146 residues: Hemoglobin subunit beta-C (146 aa).

Residues 2–146 (EWTDFERATI…VVSSLGRQYH (145 aa)) enclose the Globin domain. Histidine 63 and histidine 92 together coordinate heme b.

The protein belongs to the globin family. In terms of assembly, hbC is a heterotetramer of two alpha chains and two beta-C chains. In terms of tissue distribution, red blood cells.

Its function is as follows. Involved in oxygen transport from gills to the various peripheral tissues. The protein is Hemoglobin subunit beta-C (hbbc) of Trematomus bernacchii (Emerald rockcod).